We begin with the raw amino-acid sequence, 332 residues long: Decaprenyl-phosphate phosphoribosyltransferase (332 aa).

Positions 1 to 12 (MSEHAAEHHRDT) are enriched in basic and acidic residues. Residues 1–36 (MSEHAAEHHRDTQNFLTSEPHTTAIEDNKKRQPPKN) form a disordered region. Helical transmembrane passes span 50-70 (WVKNVLVLAAPLAAGADAIFN) and 74-94 (IIDVAIAFVVFCFGASAIYLV). 5-phospho-alpha-D-ribose 1-diphosphate contacts are provided by Lys-52 and Tyr-92. Residues Asn-95 and Asp-99 each contribute to the Mg(2+) site. Lys-109 lines the 5-phospho-alpha-D-ribose 1-diphosphate pocket. Helical transmembrane passes span 114 to 134 (IAAGVLPVGMAYGMAVALIAL) and 146 to 166 (VALACVIGVYIALQLGYCFGW). The 5-phospho-alpha-D-ribose 1-diphosphate site is built by Lys-167 and Arg-184. Helical transmembrane passes span 169 to 189 (MPVIDIALVSSGFMLRAMAGG) and 190 to 210 (VAAGIELSQWFLLVAAFGSLF). Trans,octa-cis-decaprenyl phosphate is bound at residue Lys-215. Helical transmembrane passes span 244-264 (FVWTMAATAVVMSYALWGFDL), 273-293 (PWYQISMVPFTIAILRYAAGV), and 310-330 (VLQVLALAWVFCIVMAVYIMP).

Belongs to the UbiA prenyltransferase family. DPPR synthase subfamily. The cofactor is Mg(2+).

It is found in the cell inner membrane. It catalyses the reaction trans,octa-cis-decaprenyl phosphate + 5-phospho-alpha-D-ribose 1-diphosphate + H(+) = trans,octa-cis-decaprenylphospho-beta-D-ribofuranose 5-phosphate + diphosphate. It functions in the pathway cell wall biogenesis; cell wall polysaccharide biosynthesis. Its function is as follows. Involved in the biosynthesis of decaprenylphosphoryl arabinose (DPA) a precursor for arabinan synthesis in mycobacterial cell wall biosynthesis. Catalyzes the transfer of a 5-phosphoribosyl residue from phosphoribose diphosphate (PRPP) to decaprenyl phosphate (DP) to form decaprenylphosphoryl-5-phosphoribose (DPPR). The protein is Decaprenyl-phosphate phosphoribosyltransferase of Corynebacterium glutamicum (strain ATCC 13032 / DSM 20300 / JCM 1318 / BCRC 11384 / CCUG 27702 / LMG 3730 / NBRC 12168 / NCIMB 10025 / NRRL B-2784 / 534).